Reading from the N-terminus, the 293-residue chain is 33 kDa chaperonin (293 aa).

2 disulfides stabilise this stretch: Cys-238-Cys-240 and Cys-271-Cys-274.

This sequence belongs to the HSP33 family. Post-translationally, under oxidizing conditions two disulfide bonds are formed involving the reactive cysteines. Under reducing conditions zinc is bound to the reactive cysteines and the protein is inactive.

The protein localises to the cytoplasm. Functionally, redox regulated molecular chaperone. Protects both thermally unfolding and oxidatively damaged proteins from irreversible aggregation. Plays an important role in the bacterial defense system toward oxidative stress. This Clostridium beijerinckii (strain ATCC 51743 / NCIMB 8052) (Clostridium acetobutylicum) protein is 33 kDa chaperonin.